The primary structure comprises 366 residues: Chorismate synthase (366 aa).

Residues R48 and R54 each coordinate NADP(+). FMN-binding positions include 125-127, 241-242, G285, 300-304, and R326; these read RSS, NA, and KPTSS.

This sequence belongs to the chorismate synthase family. In terms of assembly, homotetramer. FMNH2 serves as cofactor.

The enzyme catalyses 5-O-(1-carboxyvinyl)-3-phosphoshikimate = chorismate + phosphate. It participates in metabolic intermediate biosynthesis; chorismate biosynthesis; chorismate from D-erythrose 4-phosphate and phosphoenolpyruvate: step 7/7. Functionally, catalyzes the anti-1,4-elimination of the C-3 phosphate and the C-6 proR hydrogen from 5-enolpyruvylshikimate-3-phosphate (EPSP) to yield chorismate, which is the branch point compound that serves as the starting substrate for the three terminal pathways of aromatic amino acid biosynthesis. This reaction introduces a second double bond into the aromatic ring system. This Cereibacter sphaeroides (strain ATCC 17029 / ATH 2.4.9) (Rhodobacter sphaeroides) protein is Chorismate synthase.